We begin with the raw amino-acid sequence, 263 residues long: uncharacterized protein (263 aa).

The protein to B.subtilis soj.

This is an uncharacterized protein from Pseudomonas putida (strain ATCC 47054 / DSM 6125 / CFBP 8728 / NCIMB 11950 / KT2440).